The primary structure comprises 1037 residues: Probable aminoglycoside efflux pump (1037 aa).

The Cytoplasmic segment spans residues 1-9 (MANFFIDRP). A helical membrane pass occupies residues 10–28 (IFAWVLAILLCLTGTLAIF). At 29-339 (SLPVEQYPDL…TSFVKASIED (311 aa)) the chain is on the periplasmic side. A helical membrane pass occupies residues 340 to 359 (VVKTLLEAIALVFLVMYLFL). Residues 360 to 365 (QNFRAT) lie on the Cytoplasmic side of the membrane. Residues 366 to 385 (LIPTIAVPVVLMGTFSVLYA) traverse the membrane as a helical segment. Topologically, residues 386–391 (FGYSVN) are periplasmic. A helical transmembrane segment spans residues 392–413 (TLTMFAMVLAIGLLVDDAIVVV). Residues 414-441 (ENVERIMSEEGLTPREATRKSMGQIQGA) are Cytoplasmic-facing. The chain crosses the membrane as a helical span at residues 442 to 460 (LVGIAMVLSAVFVPMAFFG). Residues 461–473 (GTTGAIYRQFSIT) are Periplasmic-facing. The chain crosses the membrane as a helical span at residues 474–496 (IVAAMVLSVLVAMILTPALCATL). Residues 497 to 537 (LKPLKKGEHHGQKGFFAWFNQMFNRNAERYEKGVAKILHRS) are Cytoplasmic-facing. The chain crosses the membrane as a helical span at residues 538–556 (LRWIVIYVLLLGGMVFLFL). Residues 557–870 (RLPTSFLPLE…SYQERLSGAQ (314 aa)) are Periplasmic-facing. The helical transmembrane segment at 871–890 (APALYAISLLVVFLCLAALY) threads the bilayer. At 891 to 896 (ESWSVP) the chain is on the cytoplasmic side. The chain crosses the membrane as a helical span at residues 897–916 (FSVMLVVPLGVIGALLATWM). The Periplasmic segment spans residues 917 to 922 (RGLEND). A helical transmembrane segment spans residues 923-944 (VYFQVGLLTVIGLSAKNAILIV). At 945–971 (EFANEMNQKGHDLFEATLHACRQRLRP) the chain is on the cytoplasmic side. The chain crosses the membrane as a helical span at residues 972-990 (ILMTSLAFIFGVLPMATST). The Periplasmic portion of the chain corresponds to 991 to 1003 (GAGSGGQHAVGTG). The helical transmembrane segment at 1004–1026 (VMGGMISATILAIYFVPLFFVLV) threads the bilayer. Residues 1027–1037 (RRRFPLKPRPE) are Cytoplasmic-facing.

It belongs to the resistance-nodulation-cell division (RND) (TC 2.A.6) family.

Its subcellular location is the cell inner membrane. Its function is as follows. Participates in the efflux of aminoglycosides. Confers resistance to a variety of these substances. The polypeptide is Probable aminoglycoside efflux pump (acrD) (Escherichia coli (strain K12)).